The primary structure comprises 353 residues: S-adenosylmethionine:tRNA ribosyltransferase-isomerase (353 aa).

The protein belongs to the QueA family. In terms of assembly, monomer.

The protein resides in the cytoplasm. It carries out the reaction 7-aminomethyl-7-carbaguanosine(34) in tRNA + S-adenosyl-L-methionine = epoxyqueuosine(34) in tRNA + adenine + L-methionine + 2 H(+). Its pathway is tRNA modification; tRNA-queuosine biosynthesis. Functionally, transfers and isomerizes the ribose moiety from AdoMet to the 7-aminomethyl group of 7-deazaguanine (preQ1-tRNA) to give epoxyqueuosine (oQ-tRNA). This Sodalis glossinidius (strain morsitans) protein is S-adenosylmethionine:tRNA ribosyltransferase-isomerase.